Here is a 318-residue protein sequence, read N- to C-terminus: Ribokinase (318 aa).

Substrate contacts are provided by residues 11–13 (NTD), 41–45 (GKGAN), and Glu-146. ATP contacts are provided by residues Asn-190 and 229 to 234 (TLGSQG). K(+) contacts are provided by Asp-256 and Thr-258. An ATP-binding site is contributed by 261–262 (GD). A substrate-binding site is contributed by Asp-262. Asp-262 (proton acceptor) is an active-site residue. Positions 292, 295, 297, and 301 each coordinate K(+).

It belongs to the carbohydrate kinase PfkB family. Ribokinase subfamily. In terms of assembly, homodimer. Mg(2+) is required as a cofactor.

Its subcellular location is the cytoplasm. It localises to the nucleus. It catalyses the reaction D-ribose + ATP = D-ribose 5-phosphate + ADP + H(+). Its pathway is carbohydrate metabolism; D-ribose degradation; D-ribose 5-phosphate from beta-D-ribopyranose: step 2/2. With respect to regulation, activated by a monovalent cation that binds near, but not in, the active site. The most likely occupant of the site in vivo is potassium. Ion binding induces a conformational change that may alter substrate affinity. Catalyzes the phosphorylation of ribose at O-5 in a reaction requiring ATP and magnesium. The resulting D-ribose-5-phosphate can then be used either for sythesis of nucleotides, histidine, and tryptophan, or as a component of the pentose phosphate pathway. This Schizosaccharomyces pombe (strain 972 / ATCC 24843) (Fission yeast) protein is Ribokinase.